The chain runs to 324 residues: GTP cyclohydrolase 1 (324 aa).

2 disordered regions span residues 33 to 59 and 79 to 119; these read GRNN…NQAE and VPLA…TPGH. Positions 40–49 are enriched in low complexity; sequence STSSTSGTSS. Polar residues-rich tracts occupy residues 50–59 and 93–117; these read LADRQQNQAE and TNGS…STTP. Zn(2+) contacts are provided by C214, H217, and C285.

The protein belongs to the GTP cyclohydrolase I family. Toroid-shaped homodecamer, composed of two pentamers of five dimers. As to expression, isoform B is expressed almost exclusively in adult heads.

The catalysed reaction is GTP + H2O = 7,8-dihydroneopterin 3'-triphosphate + formate + H(+). Its pathway is cofactor biosynthesis; 7,8-dihydroneopterin triphosphate biosynthesis; 7,8-dihydroneopterin triphosphate from GTP: step 1/1. In terms of biological role, isoform B is required for eye pigment production, Isoform C may be required for normal embryonic development and segment pattern formation. This chain is GTP cyclohydrolase 1 (Pu), found in Drosophila melanogaster (Fruit fly).